The primary structure comprises 617 residues: Proline--tRNA ligase (617 aa).

The protein belongs to the class-II aminoacyl-tRNA synthetase family. ProS type 1 subfamily. In terms of assembly, homodimer.

It localises to the cytoplasm. It catalyses the reaction tRNA(Pro) + L-proline + ATP = L-prolyl-tRNA(Pro) + AMP + diphosphate. In terms of biological role, catalyzes the attachment of proline to tRNA(Pro) in a two-step reaction: proline is first activated by ATP to form Pro-AMP and then transferred to the acceptor end of tRNA(Pro). As ProRS can inadvertently accommodate and process non-cognate amino acids such as alanine and cysteine, to avoid such errors it has two additional distinct editing activities against alanine. One activity is designated as 'pretransfer' editing and involves the tRNA(Pro)-independent hydrolysis of activated Ala-AMP. The other activity is designated 'posttransfer' editing and involves deacylation of mischarged Ala-tRNA(Pro). The misacylated Cys-tRNA(Pro) is not edited by ProRS. The protein is Proline--tRNA ligase of Streptococcus pneumoniae (strain P1031).